We begin with the raw amino-acid sequence, 97 residues long: Co-chaperonin GroES (97 aa).

This sequence belongs to the GroES chaperonin family. In terms of assembly, heptamer of 7 subunits arranged in a ring. Interacts with the chaperonin GroEL.

The protein resides in the cytoplasm. Together with the chaperonin GroEL, plays an essential role in assisting protein folding. The GroEL-GroES system forms a nano-cage that allows encapsulation of the non-native substrate proteins and provides a physical environment optimized to promote and accelerate protein folding. GroES binds to the apical surface of the GroEL ring, thereby capping the opening of the GroEL channel. The sequence is that of Co-chaperonin GroES from Proteus mirabilis (strain HI4320).